Here is a 192-residue protein sequence, read N- to C-terminus: Adenylate kinase (192 aa).

10–15 provides a ligand contact to ATP; the sequence is GAGKGT. The interval 30–59 is NMP; sequence STGDMLRAAVAQATEVGKRAKAVMDAGQLV. Residues Thr-31, Arg-36, 57-59, 85-88, and Gln-92 each bind AMP; these read QLV and GYPR. Residues 126–142 are LID; it reads NRVAETVAAGGTVRSDD. Arg-127 lines the ATP pocket. Arg-139 and Arg-150 together coordinate AMP. Residue Ala-178 participates in ATP binding.

Belongs to the adenylate kinase family. Monomer.

Its subcellular location is the cytoplasm. It catalyses the reaction AMP + ATP = 2 ADP. It participates in purine metabolism; AMP biosynthesis via salvage pathway; AMP from ADP: step 1/1. Catalyzes the reversible transfer of the terminal phosphate group between ATP and AMP. Plays an important role in cellular energy homeostasis and in adenine nucleotide metabolism. The sequence is that of Adenylate kinase from Sinorhizobium medicae (strain WSM419) (Ensifer medicae).